Here is a 177-residue protein sequence, read N- to C-terminus: ATP synthase subunit delta (177 aa).

Belongs to the ATPase delta chain family. In terms of assembly, F-type ATPases have 2 components, F(1) - the catalytic core - and F(0) - the membrane proton channel. F(1) has five subunits: alpha(3), beta(3), gamma(1), delta(1), epsilon(1). F(0) has three main subunits: a(1), b(2) and c(10-14). The alpha and beta chains form an alternating ring which encloses part of the gamma chain. F(1) is attached to F(0) by a central stalk formed by the gamma and epsilon chains, while a peripheral stalk is formed by the delta and b chains.

The protein resides in the cell inner membrane. Its function is as follows. F(1)F(0) ATP synthase produces ATP from ADP in the presence of a proton or sodium gradient. F-type ATPases consist of two structural domains, F(1) containing the extramembraneous catalytic core and F(0) containing the membrane proton channel, linked together by a central stalk and a peripheral stalk. During catalysis, ATP synthesis in the catalytic domain of F(1) is coupled via a rotary mechanism of the central stalk subunits to proton translocation. This protein is part of the stalk that links CF(0) to CF(1). It either transmits conformational changes from CF(0) to CF(1) or is implicated in proton conduction. This Glaesserella parasuis serovar 5 (strain SH0165) (Haemophilus parasuis) protein is ATP synthase subunit delta.